A 494-amino-acid polypeptide reads, in one-letter code: Guanosine-5'-triphosphate,3'-diphosphate pyrophosphatase (494 aa).

The protein belongs to the GppA/Ppx family. GppA subfamily.

It catalyses the reaction guanosine 3'-diphosphate 5'-triphosphate + H2O = guanosine 3',5'-bis(diphosphate) + phosphate + H(+). The protein operates within purine metabolism; ppGpp biosynthesis; ppGpp from GTP: step 2/2. Its function is as follows. Catalyzes the conversion of pppGpp to ppGpp. Guanosine pentaphosphate (pppGpp) is a cytoplasmic signaling molecule which together with ppGpp controls the 'stringent response', an adaptive process that allows bacteria to respond to amino acid starvation, resulting in the coordinated regulation of numerous cellular activities. The polypeptide is Guanosine-5'-triphosphate,3'-diphosphate pyrophosphatase (Escherichia coli O6:H1 (strain CFT073 / ATCC 700928 / UPEC)).